A 527-amino-acid polypeptide reads, in one-letter code: Calcium and calcium/calmodulin-dependent serine/threonine-protein kinase (527 aa).

The Protein kinase domain maps to Y12–V314. L18–V26 provides a ligand contact to ATP. The tract at residues V25 to Q51 is disordered. The segment covering Q41 to Q51 has biased composition (low complexity). An ATP-binding site is contributed by K55. Positions R59–E78 are disordered. Catalysis depends on D179, which acts as the Proton acceptor. The helical transmembrane segment at M239–P255 threads the bilayer. T279 is subject to Phosphothreonine. Residues A337–W350 are calmodulin-binding. The stretch at T358 to R379 forms a coiled coil. 3 consecutive EF-hand domains span residues S408–S443, K444–D479, and T486–L521. Ca(2+)-binding residues include D421, N423, D425, T427, E432, D457, D459, S461, C463, E468, D499, N501, D503, K505, and E510.

The protein belongs to the protein kinase superfamily. CAMK Ser/Thr protein kinase family. CaMK subfamily. Autophosphorylation.

Its subcellular location is the membrane. The enzyme catalyses L-seryl-[protein] + ATP = O-phospho-L-seryl-[protein] + ADP + H(+). It carries out the reaction L-threonyl-[protein] + ATP = O-phospho-L-threonyl-[protein] + ADP + H(+). Activated by calcium. Autophosphorylation may play an important role in the regulation of the kinase activity. Functionally, protein kinase that recognizes the calcium spiking induced by Nod factors and translates this signal to components controlling nodulation and mycorrhizal infection responses. The protein is Calcium and calcium/calmodulin-dependent serine/threonine-protein kinase (SYM9) of Pisum sativum (Garden pea).